Here is a 620-residue protein sequence, read N- to C-terminus: E3 ubiquitin-protein ligase DTX1 (620 aa).

WWE domains follow at residues 14-94 and 95-171; these read GLGF…PVRR and NFYD…RLRR. 3 disordered regions span residues 221–248, 262–313, and 361–391; these read SQRR…LAVR, PAAG…SIPP, and PPVS…KSKN. Composition is skewed to pro residues over residues 227 to 241 and 268 to 280; these read PPAP…PGGP and EPAP…PRSP. Residues 230-233 carry the SH3-binding motif; sequence PPLP. Polar residues predominate over residues 291–307; that stretch reads QNNLNRPGPQRTTSVSA. The segment covering 379-389 has biased composition (basic residues); it reads RKTKKKHLKKS. The RING-type zinc-finger motif lies at 411 to 472; sequence CTICMERLVT…DGSLQCPTCK (62 aa).

Belongs to the Deltex family. As to quaternary structure, homodimer. May form a heterodimer with other members of the Deltex family. Interacts with NOTCH1 via its N-terminal region and EIF3F, the interaction is required for NOTCH1 deubiquitination. Interacts with EP300. Forms a heterodimer with BBAP; the heterodimerization leading to an increase of in vitro ubiquitin ligase activity. Interacts with ITCH. In terms of processing, ubiquitinated; undergoes 'Lys-29'-linked polyubiquitination catalyzed by ITCH. Widely expressed. Strongly expressed in blood vessel. Also expressed in embryonic nervous system, pancreas, lung, adrenal gland, digestive tube and muscles. Expressed in MZB cells and developing B- and T-cells.

The protein resides in the cytoplasm. It localises to the nucleus. The enzyme catalyses S-ubiquitinyl-[E2 ubiquitin-conjugating enzyme]-L-cysteine + [acceptor protein]-L-lysine = [E2 ubiquitin-conjugating enzyme]-L-cysteine + N(6)-ubiquitinyl-[acceptor protein]-L-lysine.. Its pathway is protein modification; protein ubiquitination. Functions as a ubiquitin ligase protein in vivo, mediating ubiquitination and promoting degradation of MEKK1, suggesting that it may regulate the Notch pathway via some ubiquitin ligase activity. Regulator of Notch signaling, a signaling pathway involved in cell-cell communications that regulates a broad spectrum of cell-fate determinations. Mainly acts as a positive regulator of Notch, but it also acts as a negative regulator, depending on the developmental and cell context. Mediates the antineural activity of Notch, possibly by inhibiting the transcriptional activation mediated by MATCH1. Involved in neurogenesis, lymphogenesis and myogenesis, and may also be involved in MZB (Marginal zone B) cell differentiation. Promotes B-cell development at the expense of T-cell development, suggesting that it can antagonize NOTCH1. The sequence is that of E3 ubiquitin-protein ligase DTX1 (DTX1) from Homo sapiens (Human).